Here is a 188-residue protein sequence, read N- to C-terminus: dCTP deaminase (188 aa).

DCTP contacts are provided by residues 111–116 (KSTYAR), 135–137 (TLE), Q156, Y170, K179, and Q180. The active-site Proton donor/acceptor is the E137.

It belongs to the dCTP deaminase family. Homotrimer.

The enzyme catalyses dCTP + H2O + H(+) = dUTP + NH4(+). The protein operates within pyrimidine metabolism; dUMP biosynthesis; dUMP from dCTP (dUTP route): step 1/2. In terms of biological role, catalyzes the deamination of dCTP to dUTP. The protein is dCTP deaminase of Rickettsia felis (strain ATCC VR-1525 / URRWXCal2) (Rickettsia azadi).